The primary structure comprises 981 residues: uncharacterized protein (981 aa).

Residues 535–612 (VLLNPVAIEI…SIASIIQKKS (78 aa)) enclose the Carrier domain. S571 is modified (O-(pantetheine 4'-phosphoryl)serine).

This sequence belongs to the ATP-dependent AMP-binding enzyme family.

This is an uncharacterized protein from Schizosaccharomyces pombe (strain 972 / ATCC 24843) (Fission yeast).